A 544-amino-acid chain; its full sequence is Cytochrome P450 monooxygenase cle2 (544 aa).

Residues 19–39 (LGLLIGLSLILSITWTAYTIL) form a helical membrane-spanning segment. The disordered stretch occupies residues 273 to 305 (RTQQVEQSIEKNTKNEKKEDEDEDQNEDEETPG). Residues 280–290 (SIEKNTKNEKK) are compositionally biased toward basic and acidic residues. Residues 291-304 (EDEDEDQNEDEETP) show a composition bias toward acidic residues. Cys478 is a binding site for heme.

Belongs to the cytochrome P450 family. Requires heme as cofactor.

Its subcellular location is the membrane. It participates in secondary metabolite biosynthesis; terpenoid biosynthesis. Cytochrome P450 monooxygenase; part of the cluster A that mediates the biosynthesis of chevalone E and its oxidized derivatives that possess a unique five-membered lactone ring and can synergistically enhance the cytotoxicity of doxorubicin (DOX) in breast cancer cells. Within the pathway, cle2 is involved in hydroxylation of the chavalone E scaffold at position C-20 and contributes with cle4 to the production of seven oxidation derivatives. The molecular scaffold is commonly biosynthesized by a series of enzymes including the non-reducing polyketide synthase (NR-PKS) cle1 that produces the alpha-pyrone triacetic acid lactone (TAL); The membrane-bound prenyltransferase cle5 that accepts TAL as its substrate to perform a C-3 geranylgeranylation reaction, in which the pathway-dedicated GGPS cle6 is required to provide GGPP, the other substrate of cle5; the FAD-dependent monooxygenase Cle3 that forms an (S)-epoxide ring at the terminal olefin of the geranylgeranyl group; and the terpene cyclase Cle7 that catalyzes the cyclization of the prenyl group that yields the pentacyclic pathway intermediate chevalone E. Chevalone E can derivatize into seven new oxidized analogs by the cytochrome P450 monooxygenases cle2 (acting at C-20) and cle4 (acting at C-11 and C-12). The chain is Cytochrome P450 monooxygenase cle2 from Aspergillus versicolor.